The following is a 433-amino-acid chain: Xylose isomerase (433 aa).

Catalysis depends on residues histidine 99 and aspartate 102. Mg(2+)-binding residues include glutamate 230, glutamate 266, histidine 269, aspartate 294, aspartate 305, aspartate 307, and aspartate 337.

Belongs to the xylose isomerase family. In terms of assembly, homotetramer. Mg(2+) is required as a cofactor.

It is found in the cytoplasm. It catalyses the reaction alpha-D-xylose = alpha-D-xylulofuranose. This Cereibacter sphaeroides (strain ATCC 17029 / ATH 2.4.9) (Rhodobacter sphaeroides) protein is Xylose isomerase.